Consider the following 314-residue polypeptide: Olfactory receptor 14A2 (314 aa).

Over 1 to 26 the chain is Extracellular; that stretch reads MANVTLVTGFLLMGFSNIQKLRILYG. An N-linked (GlcNAc...) asparagine glycan is attached at Asn3. Residues 27–47 form a helical membrane-spanning segment; sequence VLFLLIYLAALMSNLLIITLI. Topologically, residues 48–55 are cytoplasmic; sequence TLDVKLQT. A helical membrane pass occupies residues 56–76; the sequence is PMYFFLKNLSFLDVFLVSVPI. Topologically, residues 77 to 91 are extracellular; the sequence is PKFIVNNLTHNNSIS. Asn83 is a glycosylation site (N-linked (GlcNAc...) asparagine). Residues 92 to 112 form a helical membrane-spanning segment; the sequence is ILGCAFQLLLMTSFSAGEIFI. Cys95 and Cys177 are disulfide-bonded. Over 113-136 the chain is Cytoplasmic; it reads LTAMSYDRYVAICCPLNYEVIMNT. A helical transmembrane segment spans residues 137 to 157; that stretch reads GVCVLMASVSWAIGGLFGTAY. Residues 158 to 193 are Extracellular-facing; it reads TAGTFSMPFCGSSVIPQFFCDVPSLLRISCSETLMV. A helical membrane pass occupies residues 194-214; it reads IYAGIGVGACLSISCFICIVI. Residues 215 to 237 lie on the Cytoplasmic side of the membrane; sequence SYIYIFSTVLKIPTTKGQSKAFS. The chain crosses the membrane as a helical span at residues 238 to 258; the sequence is TCFPHLTVFTVFIITAYFVYL. At 259–267 the chain is on the extracellular side; sequence KPPSNSPSV. A helical membrane pass occupies residues 268–290; that stretch reads IDRLLSVIYTVMPPVFNPVTYSL. At 291-314 the chain is on the cytoplasmic side; that stretch reads RNNDMKCALIRLLQKTYGQEAYFI.

The protein belongs to the G-protein coupled receptor 1 family.

The protein resides in the cell membrane. Its function is as follows. Odorant receptor. The protein is Olfactory receptor 14A2 (OR14A2) of Homo sapiens (Human).